We begin with the raw amino-acid sequence, 221 residues long: Ras-related protein Rab-27A (221 aa).

At Ser-2 the chain carries N-acetylserine. Ser-2 bears the Phosphoserine mark. GTP is bound at residue 16-24 (GDSGVGKTS). Positions 38–46 (FITTVGIDF) match the Effector region motif. Residues 74–78 (DTAGQ), 133–136 (NKSD), and 163–165 (SAA) contribute to the GTP site. The cysteines at positions 123 and 188 are disulfide-linked. Positions 202 to 221 (NGHTSADPLNEEKEKGSCGC) are disordered. Over residues 211 to 221 (NEEKEKGSCGC) the composition is skewed to basic and acidic residues. S-geranylgeranyl cysteine attachment occurs at residues Cys-219 and Cys-221. Cysteine methyl ester is present on Cys-221.

This sequence belongs to the small GTPase superfamily. Rab family. As to quaternary structure, binds SYTL1, SLAC2B, MYRIP, SYTL3, SYTL4 and SYTL5. Interacts with RPH3A and RPH3A. Binds MLPH and SYTL2. Interacts with UNC13D. Does not interact with the BLOC-3 complex (heterodimer of HPS1 and HPS4). Interacts (GDP-bound form preferentially) with DENND10.

The protein resides in the membrane. Its subcellular location is the melanosome. It localises to the late endosome. It is found in the lysosome. It carries out the reaction GTP + H2O = GDP + phosphate + H(+). Regulated by guanine nucleotide exchange factors (GEFs) which promote the exchange of bound GDP for free GTP, GTPase activating proteins (GAPs) which increase the GTP hydrolysis activity, and GDP dissociation inhibitors which inhibit the dissociation of the nucleotide from the GTPase. Activated by GEFs such as DENND10. Its function is as follows. Small GTPase which cycles between active GTP-bound and inactive GDP-bound states. In its active state, binds to a variety of effector proteins to regulate homeostasis of late endocytic pathway, including endosomal positioning, maturation and secretion. Plays a role in cytotoxic granule exocytosis in lymphocytes. Required for both granule maturation and granule docking and priming at the immunologic synapse. This is Ras-related protein Rab-27A (RAB27A) from Sus scrofa (Pig).